A 62-amino-acid polypeptide reads, in one-letter code: Large ribosomal subunit protein bL28 (62 aa).

The tract at residues 1-28 (MARVCAITGRKARSGNSRSHAMNATKRK) is disordered.

The protein belongs to the bacterial ribosomal protein bL28 family.

The protein is Large ribosomal subunit protein bL28 of Bacillus thuringiensis (strain Al Hakam).